Consider the following 252-residue polypeptide: tRNA (guanine-N(1)-)-methyltransferase (252 aa).

Residues Gly113 and 133-138 (IGDYVL) contribute to the S-adenosyl-L-methionine site.

Belongs to the RNA methyltransferase TrmD family. Homodimer.

The protein localises to the cytoplasm. The catalysed reaction is guanosine(37) in tRNA + S-adenosyl-L-methionine = N(1)-methylguanosine(37) in tRNA + S-adenosyl-L-homocysteine + H(+). Its function is as follows. Specifically methylates guanosine-37 in various tRNAs. The sequence is that of tRNA (guanine-N(1)-)-methyltransferase from Baumannia cicadellinicola subsp. Homalodisca coagulata.